The sequence spans 348 residues: D-alanine--D-alanine ligase (348 aa).

The ATP-grasp domain occupies 132 to 334 (KRVLESADIP…YAELIEELVR (203 aa)). ATP is bound at residue 162–217 (EAVLSYPVFVKPANMGSSVGISKAESEEELRAAILLALTYDSRILIEQGVLAREIE). Residues Asp-288, Glu-301, and Asn-303 each contribute to the Mg(2+) site.

This sequence belongs to the D-alanine--D-alanine ligase family. It depends on Mg(2+) as a cofactor. Mn(2+) serves as cofactor.

Its subcellular location is the cytoplasm. It catalyses the reaction 2 D-alanine + ATP = D-alanyl-D-alanine + ADP + phosphate + H(+). The protein operates within cell wall biogenesis; peptidoglycan biosynthesis. Functionally, cell wall formation. The polypeptide is D-alanine--D-alanine ligase (Streptococcus equi subsp. zooepidemicus (strain MGCS10565)).